Reading from the N-terminus, the 93-residue chain is Chromosomal protein MC1 (93 aa).

Positions 1–43 (SNTRNFVLRDEEGNEHGVFTGKQPRQAALKAANRGDGTKSNPD) are disordered.

Functionally, protects DNA against thermal denaturation and modulates transcription. The protein is Chromosomal protein MC1 of Methanosarcina barkeri.